The following is a 592-amino-acid chain: Salivary peroxidase/catechol oxidase (592 aa).

Positions 1 to 21 (MWMFLKLLLFVCSSWWSCAQA) are cleaved as a signal peptide. Cysteine 24 and cysteine 37 are joined by a disulfide. Asparagine 25 carries N-linked (GlcNAc...) asparagine glycosylation. Catalysis depends on histidine 110, which acts as the Proton acceptor. Aspartate 111, threonine 187, phenylalanine 189, aspartate 191, and serine 193 together coordinate Ca(2+). Asparagine 230 is a glycosylation site (N-linked (GlcNAc...) asparagine). Cysteine 235 and cysteine 244 form a disulfide bridge. Histidine 353 contributes to the heme b binding site. The N-linked (GlcNAc...) asparagine glycan is linked to asparagine 366. Disulfide bonds link cysteine 452–cysteine 509 and cysteine 553–cysteine 580.

Belongs to the peroxidase family. XPO subfamily. Female salivary gland.

The protein resides in the secreted. The catalysed reaction is 2 catechol + O2 = 2 1,2-benzoquinone + 2 H2O. Functionally, inhibits noradrenaline-induced smooth muscle contraction in the host, probably due to the oxidation of noradrenaline, resulting in vasodilation. Exhibits peroxidase activity. The polypeptide is Salivary peroxidase/catechol oxidase (Anopheles albimanus (New world malaria mosquito)).